A 368-amino-acid chain; its full sequence is 3-dehydroquinate synthase (368 aa).

NAD(+)-binding positions include 131 to 132 (TT), Lys-144, and Lys-153. Zn(2+) contacts are provided by Glu-186, His-249, and His-267.

Belongs to the sugar phosphate cyclases superfamily. Dehydroquinate synthase family. Requires Co(2+) as cofactor. It depends on Zn(2+) as a cofactor. The cofactor is NAD(+).

It is found in the cytoplasm. The catalysed reaction is 7-phospho-2-dehydro-3-deoxy-D-arabino-heptonate = 3-dehydroquinate + phosphate. The protein operates within metabolic intermediate biosynthesis; chorismate biosynthesis; chorismate from D-erythrose 4-phosphate and phosphoenolpyruvate: step 2/7. Functionally, catalyzes the conversion of 3-deoxy-D-arabino-heptulosonate 7-phosphate (DAHP) to dehydroquinate (DHQ). This chain is 3-dehydroquinate synthase, found in Pelagibacter ubique (strain HTCC1062).